The sequence spans 152 residues: Ribosome maturation factor RimP (152 aa).

The protein belongs to the RimP family.

It localises to the cytoplasm. Required for maturation of 30S ribosomal subunits. The chain is Ribosome maturation factor RimP from Desulfatibacillum aliphaticivorans.